The sequence spans 419 residues: UDP-N-acetylglucosamine 1-carboxyvinyltransferase (419 aa).

Position 22–23 (22–23 (KN)) interacts with phosphoenolpyruvate. A UDP-N-acetyl-alpha-D-glucosamine-binding site is contributed by R93. C117 functions as the Proton donor in the catalytic mechanism. At C117 the chain carries 2-(S-cysteinyl)pyruvic acid O-phosphothioketal. Residues D307 and I329 each contribute to the UDP-N-acetyl-alpha-D-glucosamine site.

This sequence belongs to the EPSP synthase family. MurA subfamily.

The protein localises to the cytoplasm. The enzyme catalyses phosphoenolpyruvate + UDP-N-acetyl-alpha-D-glucosamine = UDP-N-acetyl-3-O-(1-carboxyvinyl)-alpha-D-glucosamine + phosphate. Its pathway is cell wall biogenesis; peptidoglycan biosynthesis. Functionally, cell wall formation. Adds enolpyruvyl to UDP-N-acetylglucosamine. The protein is UDP-N-acetylglucosamine 1-carboxyvinyltransferase of Shewanella sp. (strain ANA-3).